Consider the following 471-residue polypeptide: Methyltransferase OMS1, mitochondrial (471 aa).

A mitochondrion-targeting transit peptide spans 1–39 (MIVFRRFPTCLLHHIRQPASRSLLLESQRRSLSFTSYKY). The Mitochondrial matrix segment spans residues 40–103 (NSSHIDDDKS…AIARSEKFSK (64 aa)). A helical transmembrane segment spans residues 104-123 (GMTKYMIGAYVIFLIYGLFF). The Mitochondrial intermembrane portion of the chain corresponds to 124-471 (TKKLFAKDKE…LEPVPPVSKS (348 aa)). Residues 450–463 (FEKKDDMASKKELE) are compositionally biased toward basic and acidic residues. The tract at residues 450-471 (FEKKDDMASKKELEPVPPVSKS) is disordered.

The protein belongs to the methyltransferase superfamily. METL family.

It is found in the mitochondrion inner membrane. Its function is as follows. Mitochondrial methyltransferase which suppresses respiratory defects caused by OXA1 mutations when overexpressed. The chain is Methyltransferase OMS1, mitochondrial (OMS1) from Saccharomyces cerevisiae (strain ATCC 204508 / S288c) (Baker's yeast).